The primary structure comprises 1024 residues: Beta-galactosidase (1024 aa).

Residues asparagine 103 and aspartate 202 each contribute to the substrate site. Residue aspartate 202 coordinates Na(+). Positions 417, 419, and 462 each coordinate Mg(2+). Residues glutamate 462 and 538–541 (EYAH) contribute to the substrate site. Glutamate 462 serves as the catalytic Proton donor. Glutamate 538 acts as the Nucleophile in catalysis. Mg(2+) is bound at residue asparagine 598. Residues phenylalanine 602 and asparagine 605 each contribute to the Na(+) site. Residues asparagine 605 and tryptophan 1000 each coordinate substrate.

It belongs to the glycosyl hydrolase 2 family. As to quaternary structure, homotetramer. Requires Mg(2+) as cofactor. The cofactor is Na(+).

The enzyme catalyses Hydrolysis of terminal non-reducing beta-D-galactose residues in beta-D-galactosides.. The polypeptide is Beta-galactosidase (Klebsiella pneumoniae).